The sequence spans 166 residues: Putative transmembrane protein ORF166 (166 aa).

3 helical membrane-spanning segments follow: residues 35-55, 60-80, and 124-144; these read IILV…FAGL, PICV…FVTA, and IFCL…AFIN.

It is found in the host membrane. The chain is Putative transmembrane protein ORF166 from Acidianus convivator (ABV).